Reading from the N-terminus, the 184-residue chain is SsrA-binding protein (184 aa).

Positions 1–11 are enriched in polar residues; that stretch reads MAAKKSTPTDS. The interval 1-31 is disordered; sequence MAAKKSTPTDSGKSKGKKNKAQKGAGQKGAG.

It belongs to the SmpB family.

It localises to the cytoplasm. In terms of biological role, required for rescue of stalled ribosomes mediated by trans-translation. Binds to transfer-messenger RNA (tmRNA), required for stable association of tmRNA with ribosomes. tmRNA and SmpB together mimic tRNA shape, replacing the anticodon stem-loop with SmpB. tmRNA is encoded by the ssrA gene; the 2 termini fold to resemble tRNA(Ala) and it encodes a 'tag peptide', a short internal open reading frame. During trans-translation Ala-aminoacylated tmRNA acts like a tRNA, entering the A-site of stalled ribosomes, displacing the stalled mRNA. The ribosome then switches to translate the ORF on the tmRNA; the nascent peptide is terminated with the 'tag peptide' encoded by the tmRNA and targeted for degradation. The ribosome is freed to recommence translation, which seems to be the essential function of trans-translation. The chain is SsrA-binding protein from Corynebacterium jeikeium (strain K411).